The following is a 494-amino-acid chain: MQKKYVVALDQGTTSSRAIVFDHDANIVSVSQREFTQLYPNPGWVEHDPMEIWASQSSVLIESLARAGIHSDEVAAIGITNQRETTIIWEKDTGKPVYNAIVWQCRRSSEICEQLKAQGLEDYVRENTGLLLDPYFSGTKIKWILDNVPDARAKAKRGELLFGTVDTWLLWKLTEGKVHVTDPTNAARTLLFNIHSLSWDTKLLEALDIPAAMLPEVKPSCSVYGTTRIAGEGSEIPLAGIAGDQQAALFGQLCVEPGMAKNTYGTGCFLLMNTGNKAVRSSHGLLTTVAVGAQGEVNYALEGSVFMGGATIQWLRDELGLIRDASDTEYFASKVADTNGVYLVPAFVGLGAPYWDPNARGALFGLTRGANRNHIIRAALESIAYQSKDLLDAMIKDSGERLKSLKVDGGAVANDFLMQFQADITDVEVLRPSVCETTALGAAFLAGLAVGFWTSVTELKYKACIDKHFKPNIDASQRERLYAGWQDAVARTRS.

T13 contacts ADP. Residues T13, T14, and S15 each coordinate ATP. T13 contributes to the sn-glycerol 3-phosphate binding site. R17 is an ADP binding site. Residues R83, E84, Y135, and D244 each coordinate sn-glycerol 3-phosphate. The glycerol site is built by R83, E84, Y135, D244, and Q245. 2 residues coordinate ADP: T266 and G309. T266, G309, Q313, and G410 together coordinate ATP. 2 residues coordinate ADP: G410 and N414.

Belongs to the FGGY kinase family.

The enzyme catalyses glycerol + ATP = sn-glycerol 3-phosphate + ADP + H(+). It functions in the pathway polyol metabolism; glycerol degradation via glycerol kinase pathway; sn-glycerol 3-phosphate from glycerol: step 1/1. With respect to regulation, inhibited by fructose 1,6-bisphosphate (FBP). Its function is as follows. Key enzyme in the regulation of glycerol uptake and metabolism. Catalyzes the phosphorylation of glycerol to yield sn-glycerol 3-phosphate. The sequence is that of Glycerol kinase from Shewanella sp. (strain ANA-3).